The following is a 292-amino-acid chain: Polyamine aminopropyltransferase 1 (292 aa).

The PABS domain occupies 1–244 (MELGMFRLNI…YVNSFVFASD (244 aa)). Gln35 contributes to the S-methyl-5'-thioadenosine binding site. Spermidine contacts are provided by His66 and Glu90. Residues Asp110 and 142-143 (DG) contribute to the S-methyl-5'-thioadenosine site. Asp163 serves as the catalytic Proton acceptor.

The protein belongs to the spermidine/spermine synthase family. Homodimer or homotetramer.

It localises to the cytoplasm. The enzyme catalyses norspermine + S-adenosyl 3-(methylsulfanyl)propylamine = caldopentamine + S-methyl-5'-thioadenosine + 2 H(+). It catalyses the reaction norspermidine + S-adenosyl 3-(methylsulfanyl)propylamine = norspermine + S-methyl-5'-thioadenosine + H(+). It carries out the reaction S-adenosyl 3-(methylsulfanyl)propylamine + spermidine = thermospermine + S-methyl-5'-thioadenosine + H(+). Functionally, involved in the biosynthesis of polyamines which are thought to support the growth of thermophilic microorganisms under high-temperature conditions. It seems that long-chain and branched-chain of polyamines effectively stabilize DNA and RNA, respectively. Catalyzes the irreversible transfer of a propylamine group from the amino donor S-adenosylmethioninamine (decarboxy-AdoMet) to norspermidine, spermidine and norspermine to yield norspermine, thermospermine and caldopentamine, respectively. It can also synthesize sym-norspermidine (bis(3-aminopropyl)amine) from 1,3-diaminopropane with a very low activity. The biosynthesis of caldohexamine and caldoheptamine from caldopentamine has been also observed. The protein is Polyamine aminopropyltransferase 1 of Hyperthermus butylicus (strain DSM 5456 / JCM 9403 / PLM1-5).